A 240-amino-acid polypeptide reads, in one-letter code: Putative N-acetylmannosamine-6-phosphate 2-epimerase (240 aa).

The protein belongs to the NanE family.

The enzyme catalyses an N-acyl-D-glucosamine 6-phosphate = an N-acyl-D-mannosamine 6-phosphate. Its pathway is amino-sugar metabolism; N-acetylneuraminate degradation; D-fructose 6-phosphate from N-acetylneuraminate: step 3/5. Converts N-acetylmannosamine-6-phosphate (ManNAc-6-P) to N-acetylglucosamine-6-phosphate (GlcNAc-6-P). In Vibrio cholerae serotype O1 (strain ATCC 39541 / Classical Ogawa 395 / O395), this protein is Putative N-acetylmannosamine-6-phosphate 2-epimerase.